Consider the following 119-residue polypeptide: Protein TusC (119 aa).

Belongs to the DsrF/TusC family. As to quaternary structure, heterohexamer, formed by a dimer of trimers. The hexameric TusBCD complex contains 2 copies each of TusB, TusC and TusD. The TusBCD complex interacts with TusE.

It localises to the cytoplasm. Part of a sulfur-relay system required for 2-thiolation of 5-methylaminomethyl-2-thiouridine (mnm(5)s(2)U) at tRNA wobble positions. In Buchnera aphidicola subsp. Schizaphis graminum (strain Sg), this protein is Protein TusC.